The sequence spans 166 residues: 3-hydroxyacyl-[acyl-carrier-protein] dehydratase, mitochondrial (166 aa).

The N-terminal 17 residues, 1-17, are a transit peptide targeting the mitochondrion; sequence MLAKTVFPRGLLVLRSF. Residues 34–125 form the MaoC-like domain; the sequence is ETRVFSSEDI…VQAIALRETK (92 aa).

Homodimer. In terms of tissue distribution, expressed in leaves, roots, siliques and flowers.

The protein resides in the mitochondrion. It carries out the reaction a (3R)-hydroxyacyl-[ACP] = a (2E)-enoyl-[ACP] + H2O. The catalysed reaction is (3R)-hydroxyhexadecanoyl-[ACP] = (2E)-hexadecenoyl-[ACP] + H2O. The enzyme catalyses (3R)-hydroxydecanoyl-[ACP] = (2E)-decenoyl-[ACP] + H2O. It functions in the pathway lipid metabolism; fatty acid biosynthesis. Functionally, 3-hydroxyl-[acyl-carrier-protein] (3-hydroxyl-ACP) dehydratase required for mitochondrial fatty acid synthesis (mtFAS). MtFAS are essential for photorespiration and plant development, probably by influencing mitochondrial membrane lipid composition and other lipid metabolic pathways. This chain is 3-hydroxyacyl-[acyl-carrier-protein] dehydratase, mitochondrial, found in Arabidopsis thaliana (Mouse-ear cress).